The following is a 379-amino-acid chain: tRNA-specific 2-thiouridylase MnmA (379 aa).

ATP-binding positions include 6 to 13 and L32; that span reads AMSGGVDS. C101 acts as the Nucleophile in catalysis. Residues C101 and C199 are joined by a disulfide bond. G125 provides a ligand contact to ATP. Positions 148-150 are interaction with tRNA; sequence KDQ. C199 acts as the Cysteine persulfide intermediate in catalysis.

It belongs to the MnmA/TRMU family.

Its subcellular location is the cytoplasm. The catalysed reaction is S-sulfanyl-L-cysteinyl-[protein] + uridine(34) in tRNA + AH2 + ATP = 2-thiouridine(34) in tRNA + L-cysteinyl-[protein] + A + AMP + diphosphate + H(+). In terms of biological role, catalyzes the 2-thiolation of uridine at the wobble position (U34) of tRNA, leading to the formation of s(2)U34. The protein is tRNA-specific 2-thiouridylase MnmA of Arthrobacter sp. (strain FB24).